A 203-amino-acid chain; its full sequence is NADH-quinone oxidoreductase subunit C (203 aa).

Belongs to the complex I 30 kDa subunit family. As to quaternary structure, NDH-1 is composed of 14 different subunits. Subunits NuoB, C, D, E, F, and G constitute the peripheral sector of the complex.

Its subcellular location is the cell inner membrane. It catalyses the reaction a quinone + NADH + 5 H(+)(in) = a quinol + NAD(+) + 4 H(+)(out). NDH-1 shuttles electrons from NADH, via FMN and iron-sulfur (Fe-S) centers, to quinones in the respiratory chain. The immediate electron acceptor for the enzyme in this species is believed to be ubiquinone. Couples the redox reaction to proton translocation (for every two electrons transferred, four hydrogen ions are translocated across the cytoplasmic membrane), and thus conserves the redox energy in a proton gradient. The chain is NADH-quinone oxidoreductase subunit C from Delftia acidovorans (strain DSM 14801 / SPH-1).